The chain runs to 435 residues: Adenylosuccinate synthetase (435 aa).

GTP contacts are provided by residues G17–K23 and G45–T47. Catalysis depends on D18, which acts as the Proton acceptor. Residues D18 and G45 each coordinate Mg(2+). IMP contacts are provided by residues D18–K21, N43–H46, T135, R149, Q230, T245, and R309. The Proton donor role is filled by H46. T305 to R311 serves as a coordination point for substrate. Residues R311, L337–D339, and S419–G421 each bind GTP.

It belongs to the adenylosuccinate synthetase family. In terms of assembly, homodimer. Mg(2+) is required as a cofactor.

It is found in the cytoplasm. The catalysed reaction is IMP + L-aspartate + GTP = N(6)-(1,2-dicarboxyethyl)-AMP + GDP + phosphate + 2 H(+). It functions in the pathway purine metabolism; AMP biosynthesis via de novo pathway; AMP from IMP: step 1/2. Functionally, plays an important role in the de novo pathway of purine nucleotide biosynthesis. Catalyzes the first committed step in the biosynthesis of AMP from IMP. The polypeptide is Adenylosuccinate synthetase (Spiroplasma citri).